Reading from the N-terminus, the 312-residue chain is Ribosomal protein L11 methyltransferase (312 aa).

Residues Thr-162, Gly-183, Asp-205, and Asn-248 each contribute to the S-adenosyl-L-methionine site.

It belongs to the methyltransferase superfamily. PrmA family.

It is found in the cytoplasm. The enzyme catalyses L-lysyl-[protein] + 3 S-adenosyl-L-methionine = N(6),N(6),N(6)-trimethyl-L-lysyl-[protein] + 3 S-adenosyl-L-homocysteine + 3 H(+). Functionally, methylates ribosomal protein L11. The chain is Ribosomal protein L11 methyltransferase from Geobacillus kaustophilus (strain HTA426).